The following is a 130-amino-acid chain: Small ribosomal subunit protein uS8 (130 aa).

It belongs to the universal ribosomal protein uS8 family. As to quaternary structure, part of the 30S ribosomal subunit. Contacts proteins S5 and S12.

In terms of biological role, one of the primary rRNA binding proteins, it binds directly to 16S rRNA central domain where it helps coordinate assembly of the platform of the 30S subunit. This chain is Small ribosomal subunit protein uS8, found in Buchnera aphidicola subsp. Acyrthosiphon kondoi (Acyrthosiphon kondoi symbiotic bacterium).